The following is an 805-amino-acid chain: Phenylalanine--tRNA ligase beta subunit (805 aa).

In terms of domain architecture, tRNA-binding spans 40–162 (FKNPDYLQLG…NRDEFGDYLS (123 aa)). The B5 domain maps to 412–486 (AFNRKIYLNF…KILDLNKIKE (75 aa)). Residues aspartate 464, aspartate 470, glutamate 473, and glutamate 474 each contribute to the Mg(2+) site.

This sequence belongs to the phenylalanyl-tRNA synthetase beta subunit family. Type 1 subfamily. As to quaternary structure, tetramer of two alpha and two beta subunits. Mg(2+) is required as a cofactor.

It localises to the cytoplasm. The catalysed reaction is tRNA(Phe) + L-phenylalanine + ATP = L-phenylalanyl-tRNA(Phe) + AMP + diphosphate + H(+). This Mycoplasma pneumoniae (strain ATCC 29342 / M129 / Subtype 1) (Mycoplasmoides pneumoniae) protein is Phenylalanine--tRNA ligase beta subunit (pheT).